The sequence spans 188 residues: MGLKADSWIKKMSLEHGMISPFCEKQVGKNVISYGLSSYGYDIRVGSEFMLFDNKNALIDPKNFDPNNATKIDASKEGFFILPANAFALAHTIEYFKMPKDTLAICLGKSTYARCGIIVNVTPFEPEFEGYITIEISNTTNLPAKVYANEGIAQVVFLQGDEMCEQSYKDRGGKYQGQVGITLPKILK.

109 to 114 (KSTYAR) serves as a coordination point for dCTP. Catalysis depends on glutamate 135, which acts as the Proton donor/acceptor. Glutamine 154, tyrosine 168, and glutamine 178 together coordinate dCTP.

The protein belongs to the dCTP deaminase family. Homotrimer.

The catalysed reaction is dCTP + H2O + H(+) = dUTP + NH4(+). It participates in pyrimidine metabolism; dUMP biosynthesis; dUMP from dCTP (dUTP route): step 1/2. Its function is as follows. Catalyzes the deamination of dCTP to dUTP. The sequence is that of dCTP deaminase from Helicobacter pylori (strain G27).